A 358-amino-acid chain; its full sequence is Ion-translocating oxidoreductase complex subunit D (358 aa).

The next 4 membrane-spanning stretches (helical) occupy residues 19 to 39, 41 to 61, 79 to 99, and 125 to 145; these read IMLW…YYFG, GVVL…FIAI, LTAL…VIII, and IGYV…MPPI. Threonine 186 bears the FMN phosphoryl threonine mark. 5 helical membrane passes run 220 to 240, 248 to 268, 271 to 291, 297 to 317, and 321 to 341; these read FAQG…FLIL, IPVA…FTGF, LSAI…FIAT, SITP…VYLI, and GNYP…VPLI.

The protein belongs to the NqrB/RnfD family. In terms of assembly, the complex is composed of six subunits: RnfA, RnfB, RnfC, RnfD, RnfE and RnfG. FMN is required as a cofactor.

The protein localises to the cell inner membrane. Its function is as follows. Part of a membrane-bound complex that couples electron transfer with translocation of ions across the membrane. In Haemophilus influenzae (strain PittGG), this protein is Ion-translocating oxidoreductase complex subunit D.